Reading from the N-terminus, the 511-residue chain is uncharacterized protein (511 aa).

Residues 59-79 (VPVAANDDQPDGSRQSVRGRQ) form a disordered region.

It belongs to the transposase 25 family.

This is an uncharacterized protein from Sinorhizobium fredii (strain NBRC 101917 / NGR234).